The primary structure comprises 201 residues: MIGRLHGKIIEKQPPEMVIDVQGVGYEVLLPMTSFYSLPQVGEEATIFTHLVVREDAHLLFGFAQKQDRTLFRELIKTNGVGPKLALAILSAMSVSQFANAVENEELAKLTKIPGIGRKTAERLLVELKGKFKGVAQSDFFEEHSVETIVATHSHDPADEARDALVALGYKLADAEKMIKKVNKAGATSEQLIREALKASL.

Positions 1-64 (MIGRLHGKII…EDAHLLFGFA (64 aa)) are domain I. A domain II region spans residues 65-143 (QKQDRTLFRE…GVAQSDFFEE (79 aa)). The flexible linker stretch occupies residues 144 to 154 (HSVETIVATHS). Positions 154–201 (SHDPADEARDALVALGYKLADAEKMIKKVNKAGATSEQLIREALKASL) are domain III.

The protein belongs to the RuvA family. As to quaternary structure, homotetramer. Forms an RuvA(8)-RuvB(12)-Holliday junction (HJ) complex. HJ DNA is sandwiched between 2 RuvA tetramers; dsDNA enters through RuvA and exits via RuvB. An RuvB hexamer assembles on each DNA strand where it exits the tetramer. Each RuvB hexamer is contacted by two RuvA subunits (via domain III) on 2 adjacent RuvB subunits; this complex drives branch migration. In the full resolvosome a probable DNA-RuvA(4)-RuvB(12)-RuvC(2) complex forms which resolves the HJ.

The protein resides in the cytoplasm. Functionally, the RuvA-RuvB-RuvC complex processes Holliday junction (HJ) DNA during genetic recombination and DNA repair, while the RuvA-RuvB complex plays an important role in the rescue of blocked DNA replication forks via replication fork reversal (RFR). RuvA specifically binds to HJ cruciform DNA, conferring on it an open structure. The RuvB hexamer acts as an ATP-dependent pump, pulling dsDNA into and through the RuvAB complex. HJ branch migration allows RuvC to scan DNA until it finds its consensus sequence, where it cleaves and resolves the cruciform DNA. This Actinobacillus pleuropneumoniae serotype 5b (strain L20) protein is Holliday junction branch migration complex subunit RuvA.